Reading from the N-terminus, the 330-residue chain is MSNYFSMEAFDYDDIQLIPNKGIIKSRRDADTSVKFGNRTFKIPVVPANMESVIDDKLAVWLAENDYYYVMHRFEPEKRIPFIKMMHEKGLFASISVGIKDSEYDFIDELVKQNLKPEYITIDVAHGHSVYVIKMIKYIKEKLPNSFLTAGNIATPEAVRELENAGADATKVGVGPGKACITKLKTGFGTGGWQLAALRMCSKVASKPLIADGGIRHNGDIAKSVRFGASMVMIGSMLAGHEESPGNVIKIDGKTFKQYWGSASEVQKGAYKNVEGKQMLVPYRGSIKDTLREMQEDLQSAISYAGGRELNSIKLVDYVIVKDNIFDGDK.

The Thioimidate intermediate role is filled by C180. 209–232 is an NADP(+) binding site; that stretch reads LIADGGIRHNGDIAKSVRFGASMV.

It belongs to the IMPDH/GMPR family. GuaC type 2 subfamily.

The enzyme catalyses IMP + NH4(+) + NADP(+) = GMP + NADPH + 2 H(+). Its function is as follows. Catalyzes the irreversible NADPH-dependent deamination of GMP to IMP. It functions in the conversion of nucleobase, nucleoside and nucleotide derivatives of G to A nucleotides, and in maintaining the intracellular balance of A and G nucleotides. This chain is GMP reductase, found in Lactobacillus acidophilus (strain ATCC 700396 / NCK56 / N2 / NCFM).